The following is a 1124-amino-acid chain: ATP-dependent DNA helicase mph1 (1124 aa).

Disordered stretches follow at residues 1 to 103 and 123 to 302; these read MFTL…EARS and QLTQ…PTQH. Composition is skewed to acidic residues over residues 7-17 and 169-178; these read DSSDYFDDDLG and RDDEYDDDEE. Residues 210 to 222 show a composition bias toward polar residues; the sequence is TPIIGQQSTTIEA. Residues 226-236 show a composition bias toward acidic residues; it reads LLDDIPDDAFD. The segment covering 255–271 has biased composition (polar residues); it reads SFTQSTNRPLGVRQTTL. The Helicase ATP-binding domain occupies 328–496; it reads IAQKGLFHNL…AVIDGLDISR (169 aa). 341-348 contacts ATP; that stretch reads LPTGLGKT. The short motif at 444-447 is the DEAH box element; the sequence is DEAH. Residues 666 to 840 form the Helicase C-terminal domain; that stretch reads YLKQVVLNHF…GTRFTFHDDM (175 aa). Basic and acidic residues predominate over residues 855 to 873; sequence KRAIDIPEENTVRDLPEPK. Disordered stretches follow at residues 855 to 923 and 1016 to 1124; these read KRAI…TPEP and MPKA…DSDD. Composition is skewed to basic residues over residues 874–886 and 906–916; these read RRGRAPKRPPKKF and SKRRVPNKSKA.

It belongs to the DEAD box helicase family. DEAH subfamily. FANCM sub-subfamily. In terms of assembly, interacts with the MHF histone-fold complex to form the FANCM-MHF complex.

It is found in the nucleus. It catalyses the reaction ATP + H2O = ADP + phosphate + H(+). Functionally, ATP-dependent DNA helicase involved in DNA damage repair by homologous recombination and in genome maintenance. Capable of unwinding D-loops. Plays a role in limiting crossover recombinants during mitotic DNA double-strand break (DSB) repair. Component of a FANCM-MHF complex which promotes gene conversion at blocked replication forks, probably by reversal of the stalled fork. The polypeptide is ATP-dependent DNA helicase mph1 (Aspergillus niger (strain ATCC MYA-4892 / CBS 513.88 / FGSC A1513)).